The following is a 458-amino-acid chain: Selection and upkeep of intraepithelial T-cells protein 3 (458 aa).

Residues 1 to 24 form the signal peptide; the sequence is MGSIQIIFAAYCVVLCVLQMLVLS. Residues 25–237 are Extracellular-facing; the sequence is SEQFTITGLE…ESISIVLTGD (213 aa). In terms of domain architecture, Ig-like V-type spans 26 to 141; the sequence is EQFTITGLER…EEHITEVKVT (116 aa). Disulfide bonds link C49-C123 and C163-C217. Residues 142 to 231 enclose the Ig-like C1-type domain; that stretch reads ATSSDIKIIM…LLTHQEESIS (90 aa). N-linked (GlcNAc...) asparagine glycosylation is present at N200. Residues 238–258 traverse the membrane as a helical segment; sequence LFSWKIDWILILSIIACVMIP. Topologically, residues 259–283 are cytoplasmic; sequence YSMTSYLQQHLIHGSCSQRSHHWRK. The chain crosses the membrane as a helical span at residues 284 to 304; that stretch reads NAMVCMSSVIAIIGSMLILHL. The Extracellular portion of the chain corresponds to 305-324; the sequence is KQRVPISDQHFELDTLYLED. The chain crosses the membrane as a helical span at residues 325 to 345; the sequence is ISVILCVVIVFNLKLNLLTYY. The Cytoplasmic portion of the chain corresponds to 346 to 359; that stretch reads RLERKYDGCTPGCK. The chain crosses the membrane as a helical span at residues 360–380; that stretch reads ACFYILKIIIIILPFVFTFGC. At 381–414 the chain is on the extracellular side; that stretch reads YNAIFLKYHQLQKKVSIPDPLYYFYTSWLVNMEM. Residues 415–435 traverse the membrane as a helical segment; it reads LGVFLVFFPTFINLIEFSQFI. At 436-458 the chain is on the cytoplasmic side; it reads KTVPKPIWLCQENMREDDAIRHR.

It belongs to the SKINT family. In terms of tissue distribution, expressed in skin and thymus.

It localises to the membrane. Functionally, may act by engaging a cell surface molecule on immature T-cells in the embryonic thymus. The sequence is that of Selection and upkeep of intraepithelial T-cells protein 3 (Skint3) from Mus musculus (Mouse).